A 40-amino-acid polypeptide reads, in one-letter code: Toxin CSTX-17 (40 aa).

4 disulfide bridges follow: cysteine 2–cysteine 17, cysteine 9–cysteine 22, cysteine 16–cysteine 33, and cysteine 24–cysteine 31. Tryptophan 40 is subject to Tryptophan amide.

Post-translationally, contains 4 disulfide bonds. Expressed by the venom gland.

The protein resides in the secreted. In Cupiennius salei (American wandering spider), this protein is Toxin CSTX-17.